A 953-amino-acid polypeptide reads, in one-letter code: MITSAAGIISLLDEDEPQLKEFALHKLNAVVNDFWAEISESVDKIEVLYEDEGFRSRQFAALVASKVFYHLGAFEESLNYALGAGDLFNVNDNSEYVETIIAKCIDHYTKQCVENADLPEGEKKPIDQRLEGIVNKMFQRCLDDHKYKQAIGIALETRRLDVFEKTILESNDVPGMLAYSLKLCMSLMQNKQFRNKVLRVLVKIYMNLEKPDFINVCQCLIFLDDPQAVSDILEKLVKEDNLLMAYQICFDLYESASQQFLSSVIQNLRTVGTPIASVPGSTNTGTVPGSEKDSDSMETEEKTGSAFVGKTPEASPEPKDQTLKMIKILSGEMAIELHLQFLIRNNNTDLMILKNTKDAVRNSVCHTATVIANSFMHCGTTSDQFLRDNLEWLARATNWAKFTATASLGVIHKGHEKEALQLMATYLPKDTSPGSAYQEGGGLYALGLIHANHGGDIIDYLLNQLKNASNDIVRHGGSLGLGLAAMGTARQDVYDLLKTNLYQDDAVTGEAAGLALGLVMLGSKNAQAIEDMVGYAQETQHEKILRGLAVGIALVMYGRMEEADALIESLCRDKDPILRRSGMYTVAMAYCGSGNNKAIRRLLHVAVSDVNDDVRRAAVESLGFILFRTPEQCPSVVSLLSESYNPHVRYGAAMALGICCAGTGNKEAINLLEPMTNDPVNYVRQGALIASALIMIQQTEITCPKVNQFRQLYSKVINDKHDDVMAKFGAILAQGILDAGGHNVTISLQSRTGHTHMPSVVGVLVFTQFWFWFPLSHFLSLAYTPTCVIGLNKDLKMPKVQYKSNCKPSTFAYPAPLEVPKEKEKEKVSTAVLSITAKAKKKEKEKEKKEEEKMEVDEAEKKEEKEKKKEPEPNFQLLDNPARVMPAQLKVLTMPETCRYQPFKPLSIGGIIILKDTSEDIEELVEPVAAHGPKIEEEEQEPEPPEPFEYIDD.

Met1 is modified (N-acetylmethionine; partial). Phosphothreonine is present on Thr273. The tract at residues 279–318 (PGSTNTGTVPGSEKDSDSMETEEKTGSAFVGKTPEASPEP) is disordered. At Ser290 the chain carries Phosphoserine. The segment covering 290-303 (SEKDSDSMETEEKT) has biased composition (basic and acidic residues). Lys310 carries the post-translational modification N6-acetyllysine. Residue Thr311 is modified to Phosphothreonine. Ser315 carries the post-translational modification Phosphoserine. 10 PC repeats span residues 403 to 436 (TATA…PGSA), 441 to 474 (GGLY…DIVR), 476 to 510 (GGSL…VTGE), 511 to 545 (AAGL…EKIL), 547 to 580 (GLAV…ILRR), 581 to 616 (SGMY…DVRR), 617 to 649 (AAVE…PHVR), 651 to 685 (GAAM…YVRQ), 686 to 726 (GALI…DVMA), and 729 to 761 (GAIL…PSVV). Residue Lys720 is modified to N6-acetyllysine. Thr830 is modified (phosphothreonine). Ser834 is modified (phosphoserine). 2 disordered regions span residues 839–881 (AKKK…LDNP) and 930–953 (AHGP…YIDD). 2 stretches are compositionally biased toward basic and acidic residues: residues 842 to 852 (KEKEKEKKEEE) and 859 to 872 (AEKK…KEPE). The segment covering 936 to 953 (EEEEQEPEPPEPFEYIDD) has biased composition (acidic residues).

Belongs to the proteasome subunit S1 family. As to quaternary structure, component of the 19S proteasome regulatory particle complex. The 26S proteasome consists of a 20S core particle (CP) and two 19S regulatory subunits (RP). The regulatory particle is made of a lid composed of 9 subunits, a base containing 6 ATPases and few additional components including PSMD1. Interacts with ADRM1. Interacts with ZFAND1.

In terms of biological role, component of the 26S proteasome, a multiprotein complex involved in the ATP-dependent degradation of ubiquitinated proteins. This complex plays a key role in the maintenance of protein homeostasis by removing misfolded or damaged proteins, which could impair cellular functions, and by removing proteins whose functions are no longer required. Therefore, the proteasome participates in numerous cellular processes, including cell cycle progression, apoptosis, or DNA damage repair. In Pongo abelii (Sumatran orangutan), this protein is 26S proteasome non-ATPase regulatory subunit 1 (PSMD1).